The following is a 312-amino-acid chain: Olfactory receptor 10C1 (312 aa).

The Extracellular segment spans residues 1–24 (MSANTSMVTEFLLLGFSHLADLQG). An N-linked (GlcNAc...) asparagine glycan is attached at Asn-4. The chain crosses the membrane as a helical span at residues 25 to 45 (LLFSVFLTIYLLTVAGNFLIV). The Cytoplasmic portion of the chain corresponds to 46-53 (VLVSTDAA). The helical transmembrane segment at 54–74 (LQSPMYFFLRTLSALEIGYTS) threads the bilayer. The Extracellular portion of the chain corresponds to 75–98 (VTVPLLLHHLLTGRRHISRSGCAL). Cys-96 and Cys-188 are disulfide-bonded. A helical transmembrane segment spans residues 99-119 (QMFFFLFFGATECCLLAAMAY). At 120–138 (DRYAAICEPLRYPLLLSHR) the chain is on the cytoplasmic side. The helical transmembrane segment at 139 to 159 (VCLQLAGSAWACGVLVGLGHT) threads the bilayer. The Extracellular portion of the chain corresponds to 160–196 (PFIFSLPFCGPNTIPQFFCEIQPVLQLVCGDTSLNEL). Residues 197 to 216 (QIILATALLILCPFGLILGS) form a helical membrane-spanning segment. The Cytoplasmic portion of the chain corresponds to 217 to 236 (YGRILVTIFRIPSVAGRRKA). A helical transmembrane segment spans residues 237 to 257 (FSTCSSHLIMVSLFYGTALFI). Residues 258 to 270 (YIRPKASYDPATD) are Extracellular-facing. The helical transmembrane segment at 271–291 (PLVSLFYAVVTPILNPIIYSL) threads the bilayer. At 292 to 312 (RNTEVKAALKRTIQKTVPMEI) the chain is on the cytoplasmic side.

Belongs to the G-protein coupled receptor 1 family.

It is found in the cell membrane. In terms of biological role, odorant receptor. This Homo sapiens (Human) protein is Olfactory receptor 10C1 (OR10C1).